The following is a 264-amino-acid chain: Thymidylate synthase (264 aa).

Arg-21 contacts dUMP. His-51 is a (6R)-5,10-methylene-5,6,7,8-tetrahydrofolate binding site. Position 126-127 (126-127 (RR)) interacts with dUMP. Catalysis depends on Cys-146, which acts as the Nucleophile. Residues 166 to 169 (RSAD), Asn-177, and 207 to 209 (HLY) contribute to the dUMP site. Asp-169 contacts (6R)-5,10-methylene-5,6,7,8-tetrahydrofolate. Ala-263 is a (6R)-5,10-methylene-5,6,7,8-tetrahydrofolate binding site.

Belongs to the thymidylate synthase family. Bacterial-type ThyA subfamily. In terms of assembly, homodimer.

The protein localises to the cytoplasm. It carries out the reaction dUMP + (6R)-5,10-methylene-5,6,7,8-tetrahydrofolate = 7,8-dihydrofolate + dTMP. Its pathway is pyrimidine metabolism; dTTP biosynthesis. Functionally, catalyzes the reductive methylation of 2'-deoxyuridine-5'-monophosphate (dUMP) to 2'-deoxythymidine-5'-monophosphate (dTMP) while utilizing 5,10-methylenetetrahydrofolate (mTHF) as the methyl donor and reductant in the reaction, yielding dihydrofolate (DHF) as a by-product. This enzymatic reaction provides an intracellular de novo source of dTMP, an essential precursor for DNA biosynthesis. This Cytophaga hutchinsonii (strain ATCC 33406 / DSM 1761 / CIP 103989 / NBRC 15051 / NCIMB 9469 / D465) protein is Thymidylate synthase.